The following is a 220-amino-acid chain: MRLILLGAPGAGKGTQANFIKEKFGIPQISTGDMLRAAVKAGSPLGVEAKGYMDAGKLVPDALIIGLVKERLKDADCANGYLFDGFPRTIAQADAMKDAGVAIDYVLEIDVPFSEIVERMSGRRTHPASGRTYHVKFNPPKVEGKDDVTGEPLIQRDDDKEETVKKRLEVYEAQTKPLITYYGDWAQRGEENGLKAPQYRKISGLGTVDEIRERAFDALK.

10–15 (GAGKGT) contacts ATP. Residues 30 to 59 (STGDMLRAAVKAGSPLGVEAKGYMDAGKLV) are NMP. AMP is bound by residues Thr31, Arg36, 57-59 (KLV), 85-88 (GFPR), and Gln92. The tract at residues 122–159 (GRRTHPASGRTYHVKFNPPKVEGKDDVTGEPLIQRDDD) is LID. Residues Arg123 and 132–133 (TY) contribute to the ATP site. Residues Arg156 and Arg167 each coordinate AMP. Gly206 lines the ATP pocket.

Belongs to the adenylate kinase family. In terms of assembly, monomer.

Its subcellular location is the cytoplasm. The catalysed reaction is AMP + ATP = 2 ADP. The protein operates within purine metabolism; AMP biosynthesis via salvage pathway; AMP from ADP: step 1/1. Functionally, catalyzes the reversible transfer of the terminal phosphate group between ATP and AMP. Plays an important role in cellular energy homeostasis and in adenine nucleotide metabolism. The sequence is that of Adenylate kinase from Burkholderia ambifaria (strain ATCC BAA-244 / DSM 16087 / CCUG 44356 / LMG 19182 / AMMD) (Burkholderia cepacia (strain AMMD)).